The chain runs to 511 residues: GATA zinc finger domain-containing protein 15 (511 aa).

Over residues 1–111 (TNNNNFNNIN…FNDNCNNNSN (111 aa)) the composition is skewed to low complexity. Disordered regions lie at residues 1–194 (TNNN…NTFF), 214–313 (NVNN…NENK), and 325–355 (NLQY…VLSP). The segment covering 124–135 (SLQNINQYPLSP) has biased composition (polar residues). The segment covering 136–166 (NNNKSSNQHLSHSSSNVNSQYYQTPYYQPSQ) has biased composition (low complexity). Positions 167–185 (KQNSPNSTPPLNGCQYENH) are enriched in polar residues. 2 stretches are compositionally biased toward low complexity: residues 214–309 (NVNN…NNDN) and 337–351 (SGST…PTSP). The GATA-type zinc finger occupies 453–478 (CQACGTRASPEWRKGPDGFKSLCNAC).

The chain is GATA zinc finger domain-containing protein 15 (gtaO) from Dictyostelium discoideum (Social amoeba).